A 77-amino-acid chain; its full sequence is Integrin beta-2 (77 aa).

A disulfide bridge links Cys-36 with Cys-43. The N-linked (GlcNAc...) asparagine glycan is linked to Asn-54.

It belongs to the integrin beta chain family. In terms of assembly, dimer of an alpha and beta subunit.

It is found in the membrane. Its function is as follows. Integrins are a large family of cell surface glycoproteins that mediate cell to cell and cell to matrix adhesion. The sequence is that of Integrin beta-2 (itgb2) from Xenopus laevis (African clawed frog).